The chain runs to 111 residues: Ig heavy chain V-III region HPC76 (111 aa).

Residues 1 to 110 (ESGGGLVQPG…WGQGTTLTVS (110 aa)) enclose the Ig-like domain.

The sequence is that of Ig heavy chain V-III region HPC76 from Mus musculus (Mouse).